A 217-amino-acid polypeptide reads, in one-letter code: Large ribosomal subunit protein uL1A (217 aa).

N-acetylserine is present on S2. K47 is subject to N6-methyllysine; by RKM5. Phosphoserine occurs at positions 79 and 86.

This sequence belongs to the universal ribosomal protein uL1 family. Component of the large ribosomal subunit (LSU). Mature yeast ribosomes consist of a small (40S) and a large (60S) subunit. The 40S small subunit contains 1 molecule of ribosomal RNA (18S rRNA) and 33 different proteins (encoded by 57 genes). The large 60S subunit contains 3 rRNA molecules (25S, 5.8S and 5S rRNA) and 46 different proteins (encoded by 81 genes). uL1 forms part of the L1 stalk. N-terminally acetylated by acetyltransferase NatA.

It is found in the cytoplasm. Functionally, component of the ribosome, a large ribonucleoprotein complex responsible for the synthesis of proteins in the cell. The small ribosomal subunit (SSU) binds messenger RNAs (mRNAs) and translates the encoded message by selecting cognate aminoacyl-transfer RNA (tRNA) molecules. The large subunit (LSU) contains the ribosomal catalytic site termed the peptidyl transferase center (PTC), which catalyzes the formation of peptide bonds, thereby polymerizing the amino acids delivered by tRNAs into a polypeptide chain. The nascent polypeptides leave the ribosome through a tunnel in the LSU and interact with protein factors that function in enzymatic processing, targeting, and the membrane insertion of nascent chains at the exit of the ribosomal tunnel. uL1 forms part of the L1 stalk, a mobile element that plays a role in evacuating the exit-site tRNA. The sequence is that of Large ribosomal subunit protein uL1A from Saccharomyces cerevisiae (strain ATCC 204508 / S288c) (Baker's yeast).